We begin with the raw amino-acid sequence, 259 residues long: UPF0246 protein PP_1289 (259 aa).

This sequence belongs to the UPF0246 family.

This is UPF0246 protein PP_1289 from Pseudomonas putida (strain ATCC 47054 / DSM 6125 / CFBP 8728 / NCIMB 11950 / KT2440).